Reading from the N-terminus, the 74-residue chain is Small heat shock protein hspG10 (74 aa).

The 44-residue stretch at 31–74 (KTIIDILPSMDVTMTNDKLIIETELAGISKDHIEIDIKDSILTI) folds into the sHSP domain.

The protein belongs to the small heat shock protein (HSP20) family.

This chain is Small heat shock protein hspG10 (hspG10), found in Dictyostelium discoideum (Social amoeba).